Consider the following 520-residue polypeptide: Amine oxidase [flavin-containing] B (520 aa).

Ser2 carries the post-translational modification N-acetylserine. At 2–489 (SNKCDVVVVG…TFLERHLPSV (488 aa)) the chain is on the cytoplasmic side. Position 52 is an N6-acetyllysine (Lys52). The residue at position 397 (Cys397) is an S-8alpha-FAD cysteine. A helical; Anchor for type IV membrane protein membrane pass occupies residues 490-516 (PGLLRLIGLTTIFSATALGFLAHKRGL). Residues 517–520 (LVRV) are Mitochondrial intermembrane-facing.

As to quaternary structure, monomer, homo- or heterodimer (containing two subunits of similar size). Each subunit contains a covalently bound flavin. Enzymatically active as monomer. The cofactor is FAD.

It is found in the mitochondrion outer membrane. It carries out the reaction a secondary aliphatic amine + O2 + H2O = a primary amine + an aldehyde + H2O2. It catalyses the reaction (R)-adrenaline + O2 + H2O = (R)-3,4-dihydroxymandelaldehyde + methylamine + H2O2. The catalysed reaction is a primary methyl amine + O2 + H2O = an aldehyde + H2O2 + NH4(+). The enzyme catalyses benzylamine + O2 + H2O = benzaldehyde + H2O2 + NH4(+). It carries out the reaction dopamine + O2 + H2O = 3,4-dihydroxyphenylacetaldehyde + H2O2 + NH4(+). It catalyses the reaction tyramine + O2 + H2O = (4-hydroxyphenyl)acetaldehyde + H2O2 + NH4(+). The catalysed reaction is (R)-noradrenaline + O2 + H2O = (R)-3,4-dihydroxymandelaldehyde + H2O2 + NH4(+). The enzyme catalyses 2-phenylethylamine + O2 + H2O = 2-phenylacetaldehyde + H2O2 + NH4(+). It carries out the reaction N-acetylputrescine + O2 + H2O = 4-acetamidobutanal + H2O2 + NH4(+). Inhibited by deprenyl. Its function is as follows. Catalyzes the oxidative deamination of primary and some secondary amines such as neurotransmitters, and exogenous amines including the tertiary amine, neurotoxin 1-methyl-4-phenyl-1,2,3,6-tetrahydropyridine (MPTP), with concomitant reduction of oxygen to hydrogen peroxide and participates in the metabolism of neuroactive and vasoactive amines in the central nervous system and peripheral tissues. Preferentially degrades benzylamine and phenylethylamine. This Homo sapiens (Human) protein is Amine oxidase [flavin-containing] B.